The primary structure comprises 195 residues: SXP/RAL-2-like protein 2 (195 aa).

The segment at 162-195 (EKVHGGSHGGLRGGPGGPRDGPRGGPRGGPRGGR) is disordered. A compositionally biased stretch (gly residues) spans 167–195 (GSHGGLRGGPGGPRDGPRGGPRGGPRGGR).

The protein belongs to the SXP/RAL-2 family.

This Caenorhabditis elegans protein is SXP/RAL-2-like protein 2.